The primary structure comprises 377 residues: MDLAPTSPQAQARALTVLGLESSCDETAAAILRREVDGSVTVLADRVLGQNDAHAPFGGVVPEIAARAHAEAMDGLVSQALAEAGLAVADLDGIAATSGPGLIGGVMAALMTAKGLALGAGKPLIAVNHLEGHALSPRISEPLAFPYLLLLVSGGHTQLLIAEGVGVYHRLGSTMDDAAGEAFDKTAKVMGLGFPGGPALERCAQSGDATRFALPVPLKGKPGCDFSFAGLKTAARQIWDGLDAPSDQDRADLSACVQAAIARALSSRTRRALAMFVDRFPDASRPMALVVAGGVAANKAVRAALEDEAAAAGFRLVAPPMKWCTDNAAMIALVGLEKLARGQIDGLDAPARARWPLDGAAAKSDPAIGSGRKGPKA.

Histidine 129 and histidine 133 together coordinate Fe cation. Substrate contacts are provided by residues 151-155 (LVSGG), aspartate 184, glycine 197, and asparagine 298. Aspartate 326 lines the Fe cation pocket. The segment at 358-377 (DGAAAKSDPAIGSGRKGPKA) is disordered.

This sequence belongs to the KAE1 / TsaD family. It depends on Fe(2+) as a cofactor.

The protein resides in the cytoplasm. It catalyses the reaction L-threonylcarbamoyladenylate + adenosine(37) in tRNA = N(6)-L-threonylcarbamoyladenosine(37) in tRNA + AMP + H(+). Functionally, required for the formation of a threonylcarbamoyl group on adenosine at position 37 (t(6)A37) in tRNAs that read codons beginning with adenine. Is involved in the transfer of the threonylcarbamoyl moiety of threonylcarbamoyl-AMP (TC-AMP) to the N6 group of A37, together with TsaE and TsaB. TsaD likely plays a direct catalytic role in this reaction. The protein is tRNA N6-adenosine threonylcarbamoyltransferase of Maricaulis maris (strain MCS10) (Caulobacter maris).